An 80-amino-acid chain; its full sequence is Translation initiation factor IF-1, chloroplastic (80 aa).

Positions 1–72 (MKKQNLIDME…TKGRIIYRLR (72 aa)) constitute an S1-like domain.

It belongs to the IF-1 family. Component of the 30S ribosomal translation pre-initiation complex which assembles on the 30S ribosome in the order IF-2 and IF-3, IF-1 and N-formylmethionyl-tRNA(fMet); mRNA recruitment can occur at any time during PIC assembly.

It is found in the plastid. It localises to the chloroplast. Functionally, one of the essential components for the initiation of protein synthesis. Stabilizes the binding of IF-2 and IF-3 on the 30S subunit to which N-formylmethionyl-tRNA(fMet) subsequently binds. Helps modulate mRNA selection, yielding the 30S pre-initiation complex (PIC). Upon addition of the 50S ribosomal subunit IF-1, IF-2 and IF-3 are released leaving the mature 70S translation initiation complex. This Adiantum capillus-veneris (Maidenhair fern) protein is Translation initiation factor IF-1, chloroplastic.